The chain runs to 107 residues: FK506-binding protein 1 (107 aa).

The 89-residue stretch at 19-107 (GSNVTVHHAG…VFEVELITFK (89 aa)) folds into the PPIase FKBP-type domain.

Belongs to the FKBP-type PPIase family.

The enzyme catalyses [protein]-peptidylproline (omega=180) = [protein]-peptidylproline (omega=0). Its activity is regulated as follows. Inhibited by both FK506 and rapamycin. PPIases accelerate the folding of proteins by catalyzing the cis-trans isomerization of proline imidic peptide bonds in oligopeptides. This Dictyostelium discoideum (Social amoeba) protein is FK506-binding protein 1 (fkbp1).